Reading from the N-terminus, the 286-residue chain is Polyamine aminopropyltransferase (286 aa).

Residues 5–238 (KTWHEKLYCH…GVMVFAWGTN (234 aa)) enclose the PABS domain. Residues His64 and Asp88 each contribute to the spermidine site. S-methyl-5'-thioadenosine contacts are provided by residues Glu108 and 140 to 141 (DG). Residue Asp158 is the Proton acceptor of the active site. 158–161 (DSTD) lines the spermidine pocket.

It belongs to the spermidine/spermine synthase family. Homodimer or homotetramer.

It is found in the cytoplasm. It catalyses the reaction S-adenosyl 3-(methylsulfanyl)propylamine + putrescine = S-methyl-5'-thioadenosine + spermidine + H(+). It participates in amine and polyamine biosynthesis; spermidine biosynthesis; spermidine from putrescine: step 1/1. Functionally, catalyzes the irreversible transfer of a propylamine group from the amino donor S-adenosylmethioninamine (decarboxy-AdoMet) to putrescine (1,4-diaminobutane) to yield spermidine. The sequence is that of Polyamine aminopropyltransferase from Buchnera aphidicola subsp. Acyrthosiphon pisum (strain 5A).